A 261-amino-acid polypeptide reads, in one-letter code: Uridine-cytidine kinase 2-B (261 aa).

Position 29 to 37 (29 to 37 (GGTASGKSS)) interacts with ATP. Substrate-binding residues include Asp86, Tyr114, His119, Arg168, Arg178, and Gln186. Asp215 provides a ligand contact to ATP. The segment at 238 to 261 (RQNGFQNGHGTPRQRRTSESSRPH) is disordered.

This sequence belongs to the uridine kinase family. In terms of assembly, homotetramer.

The catalysed reaction is uridine + ATP = UMP + ADP + H(+). The enzyme catalyses cytidine + ATP = CMP + ADP + H(+). The protein operates within pyrimidine metabolism; CTP biosynthesis via salvage pathway; CTP from cytidine: step 1/3. It functions in the pathway pyrimidine metabolism; UMP biosynthesis via salvage pathway; UMP from uridine: step 1/1. Its function is as follows. Phosphorylates uridine and cytidine to uridine monophosphate and cytidine monophosphate. Does not phosphorylate deoxyribonucleosides or purine ribonucleosides. Can use ATP or GTP as a phosphate donor. The protein is Uridine-cytidine kinase 2-B (uck2b) of Danio rerio (Zebrafish).